A 340-amino-acid chain; its full sequence is Ornithine carbamoyltransferase (340 aa).

Carbamoyl phosphate is bound by residues 57–60 (STRT), Gln84, Arg108, and 135–138 (HPTQ). L-ornithine is bound by residues Asn167, Asp231, and 235 to 236 (SM). Residues 272 to 273 (CL) and Arg317 each bind carbamoyl phosphate.

This sequence belongs to the aspartate/ornithine carbamoyltransferase superfamily. OTCase family.

The protein localises to the cytoplasm. The catalysed reaction is carbamoyl phosphate + L-ornithine = L-citrulline + phosphate + H(+). It functions in the pathway amino-acid biosynthesis; L-arginine biosynthesis; L-arginine from L-ornithine and carbamoyl phosphate: step 1/3. Reversibly catalyzes the transfer of the carbamoyl group from carbamoyl phosphate (CP) to the N(epsilon) atom of ornithine (ORN) to produce L-citrulline. In Lactiplantibacillus plantarum (strain ATCC BAA-793 / NCIMB 8826 / WCFS1) (Lactobacillus plantarum), this protein is Ornithine carbamoyltransferase (argF).